A 250-amino-acid chain; its full sequence is Purine nucleoside phosphorylase BQ2027_MB2173C (250 aa).

Positions 77, 114, and 131 each coordinate Zn(2+).

It belongs to the purine nucleoside phosphorylase YfiH/LACC1 family. In terms of assembly, homodimer. It depends on Cu(2+) as a cofactor. Requires Zn(2+) as cofactor.

It catalyses the reaction adenosine + phosphate = alpha-D-ribose 1-phosphate + adenine. It carries out the reaction S-methyl-5'-thioadenosine + phosphate = 5-(methylsulfanyl)-alpha-D-ribose 1-phosphate + adenine. The catalysed reaction is inosine + phosphate = alpha-D-ribose 1-phosphate + hypoxanthine. The enzyme catalyses adenosine + H2O + H(+) = inosine + NH4(+). Its function is as follows. Purine nucleoside enzyme that catalyzes the phosphorolysis of adenosine and inosine nucleosides, yielding D-ribose 1-phosphate and the respective free bases, adenine and hypoxanthine. Also catalyzes the phosphorolysis of S-methyl-5'-thioadenosine into adenine and S-methyl-5-thio-alpha-D-ribose 1-phosphate. Also has adenosine deaminase activity. This is Purine nucleoside phosphorylase BQ2027_MB2173C from Mycobacterium bovis (strain ATCC BAA-935 / AF2122/97).